The following is a 396-amino-acid chain: Ribosomal RNA large subunit methyltransferase I (396 aa).

A PUA domain is found at 2–81 (SVRLVLAKGR…ETIDIAFFTR (80 aa)).

The protein belongs to the methyltransferase superfamily. RlmI family.

The protein resides in the cytoplasm. It catalyses the reaction cytidine(1962) in 23S rRNA + S-adenosyl-L-methionine = 5-methylcytidine(1962) in 23S rRNA + S-adenosyl-L-homocysteine + H(+). Its function is as follows. Specifically methylates the cytosine at position 1962 (m5C1962) of 23S rRNA. The sequence is that of Ribosomal RNA large subunit methyltransferase I from Cronobacter sakazakii (strain ATCC BAA-894) (Enterobacter sakazakii).